The chain runs to 255 residues: Probable transcriptional regulatory protein PCC8801_2028 (255 aa).

Belongs to the TACO1 family.

It is found in the cytoplasm. This is Probable transcriptional regulatory protein PCC8801_2028 from Rippkaea orientalis (strain PCC 8801 / RF-1) (Cyanothece sp. (strain PCC 8801)).